The following is a 486-amino-acid chain: FAD-dependent oxidoreductase domain-containing protein 1 (486 aa).

A helical membrane pass occupies residues V66–L82.

In terms of assembly, associates with components of the mitochondrial respiratory chain complex I. It depends on FAD as a cofactor.

The protein resides in the mitochondrion inner membrane. Its function is as follows. Required for the assembly of the mitochondrial membrane respiratory chain NADH dehydrogenase (Complex I). Involved in mid-late stages of complex I assembly. This is FAD-dependent oxidoreductase domain-containing protein 1 (FOXRED1) from Bos taurus (Bovine).